Reading from the N-terminus, the 380-residue chain is Cytochrome b (380 aa).

The next 4 membrane-spanning stretches (helical) occupy residues 33 to 53 (FGSL…FLAM), 77 to 98 (WFIR…YIHV), 113 to 133 (WNVG…GYVL), and 178 to 198 (FFAF…VHLL). The heme b site is built by His-83 and His-97. Positions 182 and 196 each coordinate heme b. His-201 lines the a ubiquinone pocket. 4 helical membrane passes run 226 to 246 (TKDI…VLFA), 288 to 308 (LGGV…PYLY), 320 to 340 (LTQL…WIGA), and 347 to 367 (FITI…ILMP).

It belongs to the cytochrome b family. The cytochrome bc1 complex contains 11 subunits: 3 respiratory subunits (MT-CYB, CYC1 and UQCRFS1), 2 core proteins (UQCRC1 and UQCRC2) and 6 low-molecular weight proteins (UQCRH/QCR6, UQCRB/QCR7, UQCRQ/QCR8, UQCR10/QCR9, UQCR11/QCR10 and a cleavage product of UQCRFS1). This cytochrome bc1 complex then forms a dimer. Heme b is required as a cofactor.

It is found in the mitochondrion inner membrane. Its function is as follows. Component of the ubiquinol-cytochrome c reductase complex (complex III or cytochrome b-c1 complex) that is part of the mitochondrial respiratory chain. The b-c1 complex mediates electron transfer from ubiquinol to cytochrome c. Contributes to the generation of a proton gradient across the mitochondrial membrane that is then used for ATP synthesis. This Cricetomys emini (Emin's giant pouched rat) protein is Cytochrome b (MT-CYB).